Reading from the N-terminus, the 324-residue chain is Zinc transporter ZIP1 (324 aa).

The Extracellular portion of the chain corresponds to 1-30 (MGPWGEPELLVWRPEAAASEAPVPMGLEVK). The chain crosses the membrane as a helical span at residues 31–51 (LGALVLLLVLTLICSLVPVCV). Residues 52–68 (LRRPGANPEASASRQKA) lie on the Cytoplasmic side of the membrane. Residues 69–89 (LSLVSCFAGGVFLATCLLDLL) form a helical membrane-spanning segment. Topologically, residues 90–104 (PDYLGAIDEALAALH) are extracellular. A helical transmembrane segment spans residues 105-125 (VTLQFPLQEFILAMGFFLVLV). Residues 126 to 179 (MEQITLAYKEQSGPPPREETRALLGTVNGGPQHWHDGLGVPQAGGASSAPSALR) lie on the Cytoplasmic side of the membrane. Residues 180-200 (ACVLVFSLALHSVFEGLAVGL) traverse the membrane as a helical segment. Residues 201–206 (QRDQAR) are Extracellular-facing. A helical transmembrane segment spans residues 207-227 (AMELCLALLLHKGILAVSLSL). Over 228 to 237 (RLLQSHLRAQ) the chain is Cytoplasmic. The chain crosses the membrane as a helical span at residues 238-258 (VVAGCGILFSCMTPLGIGLGT). Residues 259 to 272 (ALAESAGPLHQLAQ) are Extracellular-facing. Residues 273–293 (SVLEGMAAGTFLYITFLEILP) form a helical membrane-spanning segment. At 294 to 303 (QELATSEQRI) the chain is on the cytoplasmic side. A helical transmembrane segment spans residues 304-324 (LKVILLLAGFALLTGLLFIQI).

It belongs to the ZIP transporter (TC 2.A.5) family.

The protein localises to the cell membrane. Its subcellular location is the endoplasmic reticulum membrane. It carries out the reaction Zn(2+)(in) = Zn(2+)(out). Transporter for the divalent cation Zn(2+). Mediates the influx of Zn(2+) into cells from extracellular space. This Bos taurus (Bovine) protein is Zinc transporter ZIP1 (SLC39A1).